The following is a 301-amino-acid chain: dTDP-4-dehydrorhamnose reductase (301 aa).

Residues 10–12 (GQV), Asp30, 39–40 (DF), and 63–65 (AHT) contribute to the NADH site. Residue 11–12 (QV) participates in NADPH binding. NADPH is bound by residues 39-40 (DF), 63-65 (AHT), and Tyr102. 104-105 (TD) is a binding site for dTDP-beta-L-rhamnose. NADH-binding residues include Tyr129 and Lys133. NADPH-binding residues include Tyr129 and Lys133. The Proton donor/acceptor role is filled by Tyr129. Residue Trp155 coordinates dTDP-beta-L-rhamnose.

This sequence belongs to the dTDP-4-dehydrorhamnose reductase family. In terms of assembly, homodimer. Mg(2+) serves as cofactor.

It catalyses the reaction dTDP-beta-L-rhamnose + NADP(+) = dTDP-4-dehydro-beta-L-rhamnose + NADPH + H(+). Its pathway is carbohydrate biosynthesis; dTDP-L-rhamnose biosynthesis. It functions in the pathway bacterial outer membrane biogenesis; LPS O-antigen biosynthesis. In terms of biological role, involved in the biosynthesis of the dTDP-L-rhamnose which is an important component of lipopolysaccharide (LPS). Catalyzes the reduction of dTDP-6-deoxy-L-lyxo-4-hexulose to yield dTDP-L-rhamnose. RmlD uses NADH and NADPH nearly equally well. The protein is dTDP-4-dehydrorhamnose reductase of Escherichia coli.